We begin with the raw amino-acid sequence, 48 residues long: DNA-directed RNA polymerase subunit Rpo12 (48 aa).

4 residues coordinate Zn(2+): cysteine 6, cysteine 9, cysteine 26, and cysteine 29.

This sequence belongs to the archaeal Rpo12/eukaryotic RPC10 RNA polymerase subunit family. In terms of assembly, part of the 13-subunit RNA polymerase. Zn(2+) serves as cofactor.

It localises to the cytoplasm. The catalysed reaction is RNA(n) + a ribonucleoside 5'-triphosphate = RNA(n+1) + diphosphate. In terms of biological role, DNA-dependent RNA polymerase (RNAP) catalyzes the transcription of DNA into RNA using the four ribonucleoside triphosphates as substrates. The protein is DNA-directed RNA polymerase subunit Rpo12 of Sulfolobus acidocaldarius (strain ATCC 33909 / DSM 639 / JCM 8929 / NBRC 15157 / NCIMB 11770).